The chain runs to 445 residues: GTPase Der (445 aa).

2 EngA-type G domains span residues 3 to 167 (PVIA…YAGQ) and 180 to 353 (VKIA…AAAM). Residues 9 to 16 (GRPNVGKS), 56 to 60 (DTGGF), 119 to 122 (NKAE), 186 to 193 (GRPNVGKS), 233 to 237 (DTAGL), and 298 to 301 (NKWD) each bind GTP. One can recognise a KH-like domain in the interval 354–438 (AKLPTPKLTR…PLRIEFRSST (85 aa)).

Belongs to the TRAFAC class TrmE-Era-EngA-EngB-Septin-like GTPase superfamily. EngA (Der) GTPase family. In terms of assembly, associates with the 50S ribosomal subunit.

Its function is as follows. GTPase that plays an essential role in the late steps of ribosome biogenesis. This Paraburkholderia xenovorans (strain LB400) protein is GTPase Der.